The following is a 578-amino-acid chain: CTP synthase 2 (578 aa).

Positions 305 to 564 (KIALVGKYTN…VAAASGTLGD (260 aa)) constitute a Glutamine amidotransferase type-1 domain. Residues C404, H537, and E539 each act as for GATase activity in the active site.

The protein belongs to the CTP synthase family. As to quaternary structure, homodimer. Oligomerizes to a tetramer in the presence of its substrates UTP and ATP. Requires Mg(2+) as cofactor.

It is found in the cytoplasm. The enzyme catalyses UTP + L-glutamine + ATP + H2O = CTP + L-glutamate + ADP + phosphate + 2 H(+). It functions in the pathway pyrimidine metabolism; CTP biosynthesis via de novo pathway; CTP from UDP: step 2/2. Activated by GTP. Subject to allosteric product inhibition by CTP. Inhibited by p-chloromercuriphenylsulfonic acid, N-ethylmaleimide and cyclopentenylcytosine (CPEC). Catalyzes the ATP-dependent amination of UTP to CTP with either L-glutamine or ammonia as the source of nitrogen. Plays an important role in the regulation of phospholipid synthesis. The chain is CTP synthase 2 (URA8) from Saccharomyces cerevisiae (strain YJM789) (Baker's yeast).